The primary structure comprises 367 residues: tRNA/tmRNA (uracil-C(5))-methyltransferase (367 aa).

Gln-182, Tyr-210, Asn-215, Glu-231, and Asp-293 together coordinate S-adenosyl-L-methionine. The active-site Nucleophile is Cys-318. Glu-352 serves as the catalytic Proton acceptor.

It belongs to the class I-like SAM-binding methyltransferase superfamily. RNA M5U methyltransferase family. TrmA subfamily.

It catalyses the reaction uridine(54) in tRNA + S-adenosyl-L-methionine = 5-methyluridine(54) in tRNA + S-adenosyl-L-homocysteine + H(+). The enzyme catalyses uridine(341) in tmRNA + S-adenosyl-L-methionine = 5-methyluridine(341) in tmRNA + S-adenosyl-L-homocysteine + H(+). In terms of biological role, dual-specificity methyltransferase that catalyzes the formation of 5-methyluridine at position 54 (m5U54) in all tRNAs, and that of position 341 (m5U341) in tmRNA (transfer-mRNA). The sequence is that of tRNA/tmRNA (uracil-C(5))-methyltransferase from Neisseria meningitidis serogroup C (strain 053442).